A 400-amino-acid chain; its full sequence is Probable tRNA sulfurtransferase (400 aa).

One can recognise a THUMP domain in the interval 60 to 164; sequence EPIIEKLKNV…KEATYITSGT (105 aa). Residues 182 to 183, 207 to 208, arginine 264, glycine 286, and glutamine 295 each bind ATP; these read LL and HF.

This sequence belongs to the ThiI family.

Its subcellular location is the cytoplasm. It catalyses the reaction [ThiI sulfur-carrier protein]-S-sulfanyl-L-cysteine + a uridine in tRNA + 2 reduced [2Fe-2S]-[ferredoxin] + ATP + H(+) = [ThiI sulfur-carrier protein]-L-cysteine + a 4-thiouridine in tRNA + 2 oxidized [2Fe-2S]-[ferredoxin] + AMP + diphosphate. The enzyme catalyses [ThiS sulfur-carrier protein]-C-terminal Gly-Gly-AMP + S-sulfanyl-L-cysteinyl-[cysteine desulfurase] + AH2 = [ThiS sulfur-carrier protein]-C-terminal-Gly-aminoethanethioate + L-cysteinyl-[cysteine desulfurase] + A + AMP + 2 H(+). Its pathway is cofactor biosynthesis; thiamine diphosphate biosynthesis. Catalyzes the ATP-dependent transfer of a sulfur to tRNA to produce 4-thiouridine in position 8 of tRNAs, which functions as a near-UV photosensor. Also catalyzes the transfer of sulfur to the sulfur carrier protein ThiS, forming ThiS-thiocarboxylate. This is a step in the synthesis of thiazole, in the thiamine biosynthesis pathway. The sulfur is donated as persulfide by IscS. This chain is Probable tRNA sulfurtransferase, found in Oceanobacillus iheyensis (strain DSM 14371 / CIP 107618 / JCM 11309 / KCTC 3954 / HTE831).